The sequence spans 125 residues: uncharacterized protein (125 aa).

The HTH dtxR-type domain maps to 1–63; sequence MSQSIEDYLE…YEPYIGITLT (63 aa).

It belongs to the DtxR/MntR family.

This is an uncharacterized protein from Methanocaldococcus jannaschii (strain ATCC 43067 / DSM 2661 / JAL-1 / JCM 10045 / NBRC 100440) (Methanococcus jannaschii).